The chain runs to 481 residues: UDP-N-acetylmuramoylalanine--D-glutamate ligase (481 aa).

G108 to S114 lines the ATP pocket.

The protein belongs to the MurCDEF family.

The protein localises to the cytoplasm. The catalysed reaction is UDP-N-acetyl-alpha-D-muramoyl-L-alanine + D-glutamate + ATP = UDP-N-acetyl-alpha-D-muramoyl-L-alanyl-D-glutamate + ADP + phosphate + H(+). Its pathway is cell wall biogenesis; peptidoglycan biosynthesis. Cell wall formation. Catalyzes the addition of glutamate to the nucleotide precursor UDP-N-acetylmuramoyl-L-alanine (UMA). This Bifidobacterium longum (strain DJO10A) protein is UDP-N-acetylmuramoylalanine--D-glutamate ligase.